We begin with the raw amino-acid sequence, 427 residues long: Enolase (427 aa).

(2R)-2-phosphoglycerate is bound at residue Gln163. The active-site Proton donor is Glu205. Asp242, Glu287, and Asp314 together coordinate Mg(2+). (2R)-2-phosphoglycerate contacts are provided by Lys339, Arg368, Ser369, and Lys390. The Proton acceptor role is filled by Lys339.

It belongs to the enolase family. Mg(2+) serves as cofactor.

The protein resides in the cytoplasm. It localises to the secreted. The protein localises to the cell surface. The catalysed reaction is (2R)-2-phosphoglycerate = phosphoenolpyruvate + H2O. The protein operates within carbohydrate degradation; glycolysis; pyruvate from D-glyceraldehyde 3-phosphate: step 4/5. Catalyzes the reversible conversion of 2-phosphoglycerate (2-PG) into phosphoenolpyruvate (PEP). It is essential for the degradation of carbohydrates via glycolysis. The chain is Enolase from Solibacter usitatus (strain Ellin6076).